Consider the following 377-residue polypeptide: 3-dehydroquinate synthase (377 aa).

NAD(+)-binding positions include glycine 115–aspartate 119, threonine 139–serine 140, lysine 152, and lysine 161. 3 residues coordinate Zn(2+): glutamate 194, histidine 256, and histidine 275.

It belongs to the sugar phosphate cyclases superfamily. Dehydroquinate synthase family. It depends on NAD(+) as a cofactor. The cofactor is Co(2+). Zn(2+) serves as cofactor.

Its subcellular location is the cytoplasm. It carries out the reaction 7-phospho-2-dehydro-3-deoxy-D-arabino-heptonate = 3-dehydroquinate + phosphate. Its pathway is metabolic intermediate biosynthesis; chorismate biosynthesis; chorismate from D-erythrose 4-phosphate and phosphoenolpyruvate: step 2/7. Its function is as follows. Catalyzes the conversion of 3-deoxy-D-arabino-heptulosonate 7-phosphate (DAHP) to dehydroquinate (DHQ). This chain is 3-dehydroquinate synthase, found in Agrobacterium fabrum (strain C58 / ATCC 33970) (Agrobacterium tumefaciens (strain C58)).